A 212-amino-acid polypeptide reads, in one-letter code: Putative aryl-alcohol dehydrogenase AAD6 (212 aa).

Y76 serves as the catalytic Proton donor.

Belongs to the aldo/keto reductase family. Aldo/keto reductase 2 subfamily.

The sequence is that of Putative aryl-alcohol dehydrogenase AAD6 from Saccharomyces cerevisiae (strain ATCC 204508 / S288c) (Baker's yeast).